The primary structure comprises 407 residues: Substance-P receptor (407 aa).

Over 1–31 (MDNVLPVDSDLSPNISTNTSEPNQFVQPAWQ) the chain is Extracellular. N-linked (GlcNAc...) asparagine glycosylation is found at N14 and N18. Residues 32-54 (IVLWAAAYTVIVVTSVVGNVVVM) form a helical membrane-spanning segment. Over 55-64 (WIILAHKRMR) the chain is Cytoplasmic. Residues 65-86 (TVTNYFLVNLAFAEASMAAFNT) traverse the membrane as a helical segment. Residues 87–106 (VVNFTYAVHNEWYYGLFYCK) are Extracellular-facing. An intrachain disulfide couples C105 to C180. Residues 107-128 (FHNFFPIAAVFASIYSMTAVAF) form a helical membrane-spanning segment. The Cytoplasmic segment spans residues 129 to 148 (DRYMAIIHPLQPRLSATATK). A helical membrane pass occupies residues 149 to 169 (VVICVIWVLALLLAFPQGYYS). Over 170-194 (TTETMPSRVVCMIEWPEHPNKIYEK) the chain is Extracellular. The chain crosses the membrane as a helical span at residues 195-219 (VYHICVTVLIYFLPLLVIGYAYTVV). Position 197 (H197) interacts with CP-96345. The Cytoplasmic segment spans residues 220–248 (GITLWASEIPGDSSDRYHEQVSAKRKVVK). Residues 249-270 (MMIVVVCTFAICWLPFHIFFLL) traverse the membrane as a helical segment. Topologically, residues 271–283 (PYINPDLYLKKFI) are extracellular. Residues 284–308 (QQVYLAIMWLAMSSTMYNPIIYCCL) traverse the membrane as a helical segment. Over 309–407 (NDRFRLGFKH…SFSFSSNVLS (99 aa)) the chain is Cytoplasmic. A lipid anchor (S-palmitoyl cysteine) is attached at C322. A disordered region spans residues 364–407 (AHEEEPEDGPKATPSSLDLTSNCSSRSDSKTMTESFSFSSNVLS). Positions 376 to 407 (TPSSLDLTSNCSSRSDSKTMTESFSFSSNVLS) are enriched in polar residues.

It belongs to the G-protein coupled receptor 1 family. In terms of assembly, interacts with ARRB1.

Its subcellular location is the cell membrane. In terms of biological role, this is a receptor for the tachykinin neuropeptide substance P. It is probably associated with G proteins that activate a phosphatidylinositol-calcium second messenger system. The rank order of affinity of this receptor to tachykinins is: substance P &gt; substance K &gt; neuromedin-K. The chain is Substance-P receptor (TACR1) from Homo sapiens (Human).